Here is a 272-residue protein sequence, read N- to C-terminus: Type II secretion system protein C (272 aa).

The Cytoplasmic segment spans residues 1–16; the sequence is MNISKLPPLSPSVIRR. A helical membrane pass occupies residues 17–35; it reads ILFYLLMLLFCQQLAMIFW. The Periplasmic portion of the chain corresponds to 36–272; that stretch reads RIGLPDNAPV…DIYMEFGGDE (237 aa).

The protein belongs to the GSP C family.

It localises to the cell inner membrane. Involved in a type II secretion system (T2SS, formerly general secretion pathway, GSP) for the export of proteins. Required for the translocation of the multiple pectic enzymes. This is Type II secretion system protein C (outC) from Dickeya dadantii (strain 3937) (Erwinia chrysanthemi (strain 3937)).